We begin with the raw amino-acid sequence, 80 residues long: Venom protein HGE029 (80 aa).

The N-terminal stretch at 1–22 (MNAKAFLAIFMIALLITDRAEA) is a signal peptide.

The protein belongs to the non-disulfide-bridged peptide (NDBP) superfamily. Long chain multifunctional peptide (group 2) family. As to expression, expressed by the venom gland.

It localises to the secreted. This is Venom protein HGE029 from Hoffmannihadrurus gertschi (Scorpion).